We begin with the raw amino-acid sequence, 93 residues long: Large ribosomal subunit protein bL31B (93 aa).

The protein belongs to the bacterial ribosomal protein bL31 family. Type B subfamily. In terms of assembly, part of the 50S ribosomal subunit.

The protein is Large ribosomal subunit protein bL31B of Psychrobacter cryohalolentis (strain ATCC BAA-1226 / DSM 17306 / VKM B-2378 / K5).